The following is a 1770-amino-acid chain: Transposon Ty2-F Gag-Pol polyprotein (1770 aa).

Composition is skewed to polar residues over residues methionine 1–histidine 11, alanine 19–asparagine 39, and lysine 49–threonine 60. 2 disordered regions span residues methionine 1–glutamine 86 and glutamine 359–histidine 453. The tract at residues glutamate 295–histidine 397 is RNA-binding. Residues threonine 369–arginine 381 show a composition bias toward low complexity. Composition is skewed to polar residues over residues isoleucine 399–valine 408 and glutamate 415–glutamine 435. Aspartate 457 serves as the catalytic For protease activity; shared with dimeric partner. The segment at asparagine 579–cysteine 636 is integrase-type zinc finger-like. The Integrase catalytic domain occupies glutamate 656–proline 831. Mg(2+) is bound by residues aspartate 667 and aspartate 732. 4 disordered regions span residues methionine 1004 to glutamate 1034, threonine 1059 to lysine 1135, leucine 1146 to aspartate 1165, and histidine 1170 to glutamate 1205. Polar residues-rich tracts occupy residues glutamate 1009–glutamate 1034 and glutamine 1065–serine 1082. Over residues leucine 1151–aspartate 1165 the composition is skewed to basic and acidic residues. A Bipartite nuclear localization signal motif is present at residues lysine 1193–arginine 1227. Residues asparagine 1353 to glutamine 1491 enclose the Reverse transcriptase Ty1/copia-type domain. The Mg(2+) site is built by aspartate 1361, aspartate 1442, aspartate 1443, aspartate 1625, glutamate 1667, and aspartate 1700. An RNase H Ty1/copia-type domain is found at aspartate 1625–lysine 1767.

The capsid protein forms a homotrimer, from which the VLPs are assembled. The protease is a homodimer, whose active site consists of two apposed aspartic acid residues. Post-translationally, initially, virus-like particles (VLPs) are composed of the structural unprocessed proteins Gag and Gag-Pol, and also contain the host initiator methionine tRNA (tRNA(i)-Met) which serves as a primer for minus-strand DNA synthesis, and a dimer of genomic Ty RNA. Processing of the polyproteins occurs within the particle and proceeds by an ordered pathway, called maturation. First, the protease (PR) is released by autocatalytic cleavage of the Gag-Pol polyprotein, and this cleavage is a prerequisite for subsequent processing at the remaining sites to release the mature structural and catalytic proteins. Maturation takes place prior to the RT reaction and is required to produce transposition-competent VLPs.

It is found in the cytoplasm. The protein localises to the nucleus. The catalysed reaction is DNA(n) + a 2'-deoxyribonucleoside 5'-triphosphate = DNA(n+1) + diphosphate. It carries out the reaction Endonucleolytic cleavage to 5'-phosphomonoester.. Its function is as follows. Capsid protein (CA) is the structural component of the virus-like particle (VLP), forming the shell that encapsulates the retrotransposons dimeric RNA genome. The particles are assembled from trimer-clustered units and there are holes in the capsid shells that allow for the diffusion of macromolecules. CA also has nucleocapsid-like chaperone activity, promoting primer tRNA(i)-Met annealing to the multipartite primer-binding site (PBS), dimerization of Ty2 RNA and initiation of reverse transcription. In terms of biological role, the aspartyl protease (PR) mediates the proteolytic cleavages of the Gag and Gag-Pol polyproteins after assembly of the VLP. Reverse transcriptase/ribonuclease H (RT) is a multifunctional enzyme that catalyzes the conversion of the retro-elements RNA genome into dsDNA within the VLP. The enzyme displays a DNA polymerase activity that can copy either DNA or RNA templates, and a ribonuclease H (RNase H) activity that cleaves the RNA strand of RNA-DNA heteroduplexes during plus-strand synthesis and hydrolyzes RNA primers. The conversion leads to a linear dsDNA copy of the retrotransposon that includes long terminal repeats (LTRs) at both ends. Functionally, integrase (IN) targets the VLP to the nucleus, where a subparticle preintegration complex (PIC) containing at least integrase and the newly synthesized dsDNA copy of the retrotransposon must transit the nuclear membrane. Once in the nucleus, integrase performs the integration of the dsDNA into the host genome. This chain is Transposon Ty2-F Gag-Pol polyprotein (TY2B-F), found in Saccharomyces cerevisiae (strain ATCC 204508 / S288c) (Baker's yeast).